The primary structure comprises 571 residues: Proline--tRNA ligase (571 aa).

Belongs to the class-II aminoacyl-tRNA synthetase family. ProS type 1 subfamily. Homodimer.

It is found in the cytoplasm. The catalysed reaction is tRNA(Pro) + L-proline + ATP = L-prolyl-tRNA(Pro) + AMP + diphosphate. Its function is as follows. Catalyzes the attachment of proline to tRNA(Pro) in a two-step reaction: proline is first activated by ATP to form Pro-AMP and then transferred to the acceptor end of tRNA(Pro). As ProRS can inadvertently accommodate and process non-cognate amino acids such as alanine and cysteine, to avoid such errors it has two additional distinct editing activities against alanine. One activity is designated as 'pretransfer' editing and involves the tRNA(Pro)-independent hydrolysis of activated Ala-AMP. The other activity is designated 'posttransfer' editing and involves deacylation of mischarged Ala-tRNA(Pro). The misacylated Cys-tRNA(Pro) is not edited by ProRS. The protein is Proline--tRNA ligase of Vibrio cholerae serotype O1 (strain ATCC 39541 / Classical Ogawa 395 / O395).